The sequence spans 163 residues: C-type lectin lectoxin-Lio2 (163 aa).

An N-terminal signal peptide occupies residues 1-21; it reads MERFIFAALLVVALSLSGTGA. 3 disulfides stabilise this stretch: cysteine 25–cysteine 36, cysteine 53–cysteine 152, and cysteine 127–cysteine 144. The 122-residue stretch at 32 to 153 folds into the C-type lectin domain; that stretch reads SDGYCYKVFK…CRSKRYFICK (122 aa). A Mannose-binding motif is present at residues 117–119; the sequence is EPN. 2 residues coordinate Ca(2+): glutamate 125 and aspartate 141.

The protein belongs to the true venom lectin family. In terms of tissue distribution, expressed by the venom gland.

The protein localises to the secreted. Mannose-binding lectin which recognizes specific carbohydrate structures and agglutinates a variety of animal cells by binding to cell-surface glycoproteins and glycolipids. May be a calcium-dependent lectin. This Erythrolamprus poecilogyrus (Water snake) protein is C-type lectin lectoxin-Lio2.